Reading from the N-terminus, the 192-residue chain is Lipid A acyltransferase PagP (192 aa).

A signal peptide spans 1-26 (MTVVNKSFLTILIFFCQILFPLNASA). Catalysis depends on residues histidine 64, aspartate 107, and serine 108.

It belongs to the lipid A palmitoyltransferase family. In terms of assembly, homodimer.

The protein localises to the cell outer membrane. It carries out the reaction a lipid A + a 1,2-diacyl-sn-glycero-3-phosphocholine = a hepta-acyl lipid A + a 2-acyl-sn-glycero-3-phosphocholine. The enzyme catalyses a lipid IVA + a 1,2-diacyl-sn-glycero-3-phosphocholine = a lipid IVB + a 2-acyl-sn-glycero-3-phosphocholine. It catalyses the reaction a lipid IIA + a 1,2-diacyl-sn-glycero-3-phosphocholine = a lipid IIB + a 2-acyl-sn-glycero-3-phosphocholine. In terms of biological role, transfers a fatty acid residue from the sn-1 position of a phospholipid to the N-linked hydroxyfatty acid chain on the proximal unit of lipid A or its precursors. This chain is Lipid A acyltransferase PagP, found in Cronobacter sakazakii (strain ATCC BAA-894) (Enterobacter sakazakii).